The following is a 325-amino-acid chain: Tartrate-resistant acid phosphatase type 5 (325 aa).

The signal sequence occupies residues 1 to 21; sequence MDTWTLLLVLHTSLLLPWAEG. Residues N116 and N147 are each glycosylated (N-linked (GlcNAc...) asparagine).

As to quaternary structure, exists either as monomer or, after proteolytic processing, as a dimer of two chains linked by disulfide bond(s). Requires Fe cation as cofactor.

It localises to the lysosome. It catalyses the reaction a phosphate monoester + H2O = an alcohol + phosphate. The chain is Tartrate-resistant acid phosphatase type 5 (ACP5) from Oryctolagus cuniculus (Rabbit).